The following is a 231-amino-acid chain: Large ribosomal subunit protein uL1 (231 aa).

This sequence belongs to the universal ribosomal protein uL1 family. In terms of assembly, part of the 50S ribosomal subunit.

Binds directly to 23S rRNA. The L1 stalk is quite mobile in the ribosome, and is involved in E site tRNA release. In terms of biological role, protein L1 is also a translational repressor protein, it controls the translation of the L11 operon by binding to its mRNA. The chain is Large ribosomal subunit protein uL1 from Buchnera aphidicola subsp. Acyrthosiphon pisum (strain 5A).